Reading from the N-terminus, the 259-residue chain is Kallikrein 1-related peptidase b22 (259 aa).

Residues 1 to 17 form the signal peptide; sequence MRFLILFLTLSLGGIDA. The propeptide at 18-24 is activation peptide; that stretch reads APPVQSR. Positions 25-256 constitute a Peptidase S1 domain; that stretch reads ILGGFKCEKN…FTSWIKDTMA (232 aa). 5 disulfide bridges follow: C31–C171, C50–C66, C150–C217, C182–C196, and C207–C232. The Charge relay system role is filled by H65. N-linked (GlcNAc...) asparagine glycosylation is present at N102. The Charge relay system role is filled by D118. The active-site Charge relay system is S211.

Belongs to the peptidase S1 family. Kallikrein subfamily.

It catalyses the reaction Preferential cleavage of Arg-|-Xaa bonds in small molecule substrates. Highly selective action to release kallidin (lysyl-bradykinin) from kininogen involves hydrolysis of Met-|-Xaa or Leu-|-Xaa.. Functionally, glandular kallikreins cleave Met-Lys and Arg-Ser bonds in kininogen to release Lys-bradykinin. This is Kallikrein 1-related peptidase b22 (Klk1b22) from Mus musculus (Mouse).